A 228-amino-acid chain; its full sequence is UPF0173 metal-dependent hydrolase BcerKBAB4_4442 (228 aa).

Belongs to the UPF0173 family.

In Bacillus mycoides (strain KBAB4) (Bacillus weihenstephanensis), this protein is UPF0173 metal-dependent hydrolase BcerKBAB4_4442.